The chain runs to 492 residues: V-type proton ATPase subunit B 1 (492 aa).

Belongs to the ATPase alpha/beta chains family. V-ATPase is a heteromultimeric enzyme composed of a peripheral catalytic V1 complex (main components: subunits A, B, C, D, E, and F) attached to an integral membrane V0 proton pore complex (main component: the proteolipid protein).

In terms of biological role, non-catalytic subunit of the peripheral V1 complex of vacuolar ATPase. V-ATPase is responsible for acidifying a variety of intracellular compartments in eukaryotic cells. This is V-type proton ATPase subunit B 1 from Acetabularia acetabulum (Mermaid's wine glass).